A 458-amino-acid polypeptide reads, in one-letter code: Sphingoid long chain base kinase 4 (458 aa).

The 139-residue stretch at 103-241 folds into the DAGKc domain; that stretch reads KRSRRFIVFI…FDLMTFEQKG (139 aa). ATP contacts are provided by residues 113 to 115 and T145; that span reads NPH. Residue 170–173 coordinates substrate; sequence GGDG. The active-site Proton donor/acceptor is D172. ATP-binding positions include E177, 202 to 204, R266, R272, and 426 to 428; these read GSG and DGE.

The protein localises to the cell membrane. Its subcellular location is the endoplasmic reticulum membrane. The protein resides in the late endosome membrane. It is found in the golgi apparatus membrane. It catalyses the reaction a sphingoid base + ATP = a sphingoid 1-phosphate + ADP + H(+). Its function is as follows. Catalyzes the phosphorylation of the sphingoid long chain bases dihydrosphingosine (DHS) and phytosphingosine (PHS) to form dihydrosphingosine 1-phosphate (DHS-1P) and phytosphingosine 1-phosphate (PHS-1P) respectively. Involved in the biosynthesis of sphingolipids and ceramides. Involved in heat-induced transient cell cycle arrest. Accumulation of phosphorylated sphingoid long chain bases (LCBPs) stimulates calcium influx and activates calcineurin signaling. Involved in heat-stress resistance. This Schizosaccharomyces pombe (strain 972 / ATCC 24843) (Fission yeast) protein is Sphingoid long chain base kinase 4 (lcb4).